The sequence spans 200 residues: Recombination protein RecR (200 aa).

The C4-type zinc finger occupies 60 to 75; it reads CVYCQALTEDDVCNIC. The Toprim domain occupies 83–177; that stretch reads TKLCIIESML…KISRIGFGVP (95 aa).

The protein belongs to the RecR family.

In terms of biological role, may play a role in DNA repair. It seems to be involved in an RecBC-independent recombinational process of DNA repair. It may act with RecF and RecO. The protein is Recombination protein RecR of Francisella tularensis subsp. tularensis (strain SCHU S4 / Schu 4).